Consider the following 129-residue polypeptide: M-zodatoxin-Lt8e (129 aa).

The N-terminal stretch at methionine 1–serine 20 is a signal peptide. A propeptide spanning residues lysine 21–arginine 60 is cleaved from the precursor. The Processing quadruplet motif motif lies at glutamate 57–arginine 60.

Post-translationally, cleavage of the propeptide depends on the processing quadruplet motif (XXXR, with at least one of X being E). As to expression, expressed by the venom gland.

The protein resides in the secreted. Insecticidal, cytolytic and antimicrobial peptide. Forms voltage-dependent, ion-permeable channels in membranes. At high concentration causes cell membrane lysis. In Lachesana tarabaevi (Spider), this protein is M-zodatoxin-Lt8e (cit 1-5).